The primary structure comprises 309 residues: Lipoyl synthase (309 aa).

Residues cysteine 43, cysteine 48, cysteine 54, cysteine 70, cysteine 74, cysteine 77, and serine 283 each contribute to the [4Fe-4S] cluster site. In terms of domain architecture, Radical SAM core spans 56 to 272 (AVRKTATFMI…KEIAMQKGFS (217 aa)).

This sequence belongs to the radical SAM superfamily. Lipoyl synthase family. The cofactor is [4Fe-4S] cluster.

Its subcellular location is the cytoplasm. It catalyses the reaction [[Fe-S] cluster scaffold protein carrying a second [4Fe-4S](2+) cluster] + N(6)-octanoyl-L-lysyl-[protein] + 2 oxidized [2Fe-2S]-[ferredoxin] + 2 S-adenosyl-L-methionine + 4 H(+) = [[Fe-S] cluster scaffold protein] + N(6)-[(R)-dihydrolipoyl]-L-lysyl-[protein] + 4 Fe(3+) + 2 hydrogen sulfide + 2 5'-deoxyadenosine + 2 L-methionine + 2 reduced [2Fe-2S]-[ferredoxin]. It functions in the pathway protein modification; protein lipoylation via endogenous pathway; protein N(6)-(lipoyl)lysine from octanoyl-[acyl-carrier-protein]. Its function is as follows. Catalyzes the radical-mediated insertion of two sulfur atoms into the C-6 and C-8 positions of the octanoyl moiety bound to the lipoyl domains of lipoate-dependent enzymes, thereby converting the octanoylated domains into lipoylated derivatives. The chain is Lipoyl synthase from Shouchella clausii (strain KSM-K16) (Alkalihalobacillus clausii).